Here is a 419-residue protein sequence, read N- to C-terminus: Tyrosine--tRNA ligase (419 aa).

Tyrosine 34 contacts L-tyrosine. The 'HIGH' region motif lies at 39–48; it reads PSGDSMHIGH. The L-tyrosine site is built by tyrosine 168 and glutamine 172. The 'KMSKS' region signature appears at 230 to 234; the sequence is KFGKS. An ATP-binding site is contributed by lysine 233. The region spanning 352–418 is the S4 RNA-binding domain; that stretch reads VNLVDWLVTL…GKKKYFLVSY (67 aa).

Belongs to the class-I aminoacyl-tRNA synthetase family. TyrS type 1 subfamily. Homodimer.

The protein localises to the cytoplasm. The enzyme catalyses tRNA(Tyr) + L-tyrosine + ATP = L-tyrosyl-tRNA(Tyr) + AMP + diphosphate + H(+). Functionally, catalyzes the attachment of tyrosine to tRNA(Tyr) in a two-step reaction: tyrosine is first activated by ATP to form Tyr-AMP and then transferred to the acceptor end of tRNA(Tyr). The protein is Tyrosine--tRNA ligase of Listeria innocua serovar 6a (strain ATCC BAA-680 / CLIP 11262).